A 408-amino-acid polypeptide reads, in one-letter code: S-adenosylmethionine synthase (408 aa).

ATP is bound at residue 142–147; it reads GEGSGD.

This sequence belongs to the AdoMet synthase 2 family. The cofactor is Mg(2+).

The enzyme catalyses L-methionine + ATP + H2O = S-adenosyl-L-methionine + phosphate + diphosphate. The protein operates within amino-acid biosynthesis; S-adenosyl-L-methionine biosynthesis; S-adenosyl-L-methionine from L-methionine: step 1/1. Its function is as follows. Catalyzes the formation of S-adenosylmethionine from methionine and ATP. This chain is S-adenosylmethionine synthase, found in Halobacterium salinarum (strain ATCC 29341 / DSM 671 / R1).